The following is a 719-amino-acid chain: Protein Hook homolog 3 (719 aa).

A Calponin-homology (CH) domain is found at V7–A123. Coiled coils occupy residues S162 to E431 and E459 to A665. The segment at E679–A719 is disordered. The span at A693 to S704 shows a compositional bias: low complexity.

This sequence belongs to the hook family. Interacts with microtubules.

It localises to the cytoplasm. It is found in the cytoskeleton. The protein resides in the golgi apparatus. Functionally, acts as an adapter protein linking the dynein motor complex to various cargos and converts dynein from a non-processive to a highly processive motor in the presence of dynactin. Facilitates the interaction between dynein and dynactin and activates dynein processivity (the ability to move along a microtubule for a long distance without falling off the track). Predominantly recruits 2 dyneins, which increases both the force and speed of the microtubule motor. Component of the FTS/Hook/FHIP complex (FHF complex). The FHF complex may function to promote vesicle trafficking and/or fusion via the homotypic vesicular protein sorting complex (the HOPS complex). May regulate clearance of endocytosed receptors such as MSR1. Participates in defining the architecture and localization of the Golgi complex. FHF complex promotes the distribution of AP-4 complex to the perinuclear area of the cell. This is Protein Hook homolog 3 (hook3) from Xenopus laevis (African clawed frog).